The sequence spans 420 residues: Dihydrolipoyllysine-residue succinyltransferase component of 2-oxoglutarate dehydrogenase complex (420 aa).

A Lipoyl-binding domain is found at 1–76 (MAEVKVPELA…EVGQAVAVVG (76 aa)). N6-lipoyllysine is present on lysine 42. The disordered stretch occupies residues 75–201 (VGEGQVNTSN…EKMSRRKKTA (127 aa)). The span at 81-90 (NTSNDSSNES) shows a compositional bias: polar residues. Over residues 91-102 (SQKDEAKEKETP) the composition is skewed to basic and acidic residues. A compositionally biased stretch (polar residues) spans 103–127 (KQSNPNSSESENTQDNSQQRINATP). In terms of domain architecture, Peripheral subunit-binding (PSBD) spans 124-160 (NATPSARRHARKNGVDLSEVSGKGNDVLRKDDVENSQ). Residues 149–158 (DVLRKDDVEN) show a composition bias toward basic and acidic residues. Low complexity predominate over residues 159–188 (SQKSSSQTAKSESKSQNSGSKQSNNNPSKP). Catalysis depends on residues histidine 391 and aspartate 395.

This sequence belongs to the 2-oxoacid dehydrogenase family. Forms a 24-polypeptide structural core with octahedral symmetry. Part of the 2-oxoglutarate dehydrogenase (OGDH) complex composed of E1 (2-oxoglutarate dehydrogenase), E2 (dihydrolipoamide succinyltransferase) and E3 (dihydrolipoamide dehydrogenase); the complex contains multiple copies of the three enzymatic components (E1, E2 and E3). Requires (R)-lipoate as cofactor.

The catalysed reaction is N(6)-[(R)-dihydrolipoyl]-L-lysyl-[protein] + succinyl-CoA = N(6)-[(R)-S(8)-succinyldihydrolipoyl]-L-lysyl-[protein] + CoA. Its pathway is amino-acid degradation; L-lysine degradation via saccharopine pathway; glutaryl-CoA from L-lysine: step 6/6. E2 component of the 2-oxoglutarate dehydrogenase (OGDH) complex which catalyzes the second step in the conversion of 2-oxoglutarate to succinyl-CoA and CO(2). The sequence is that of Dihydrolipoyllysine-residue succinyltransferase component of 2-oxoglutarate dehydrogenase complex (odhB) from Staphylococcus epidermidis (strain ATCC 12228 / FDA PCI 1200).